We begin with the raw amino-acid sequence, 180 residues long: Cell division protein SepF (180 aa).

A disordered region spans residues 14–81; the sequence is NSEDDEEFDN…SKITPISKSS (68 aa). Positions 15–35 are enriched in acidic residues; that stretch reads SEDDEEFDNEDYYLDDEEEEE. A compositionally biased stretch (basic and acidic residues) spans 57–68; it reads TRRDTTPKEKPV. Positions 69-79 are enriched in low complexity; that stretch reads KTTSKITPISK.

It belongs to the SepF family. Homodimer. Interacts with FtsZ.

The protein localises to the cytoplasm. Functionally, cell division protein that is part of the divisome complex and is recruited early to the Z-ring. Probably stimulates Z-ring formation, perhaps through the cross-linking of FtsZ protofilaments. Its function overlaps with FtsA. The chain is Cell division protein SepF from Agathobacter rectalis (strain ATCC 33656 / DSM 3377 / JCM 17463 / KCTC 5835 / VPI 0990) (Eubacterium rectale).